The primary structure comprises 133 residues: Nickel-responsive regulator (133 aa).

Positions 76, 87, 89, and 95 each coordinate Ni(2+).

Belongs to the transcriptional regulatory CopG/NikR family. Homotetramer. Ni(2+) is required as a cofactor.

Its function is as follows. Transcriptional repressor of the nikABCDE operon. Is active in the presence of excessive concentrations of intracellular nickel. The chain is Nickel-responsive regulator from Salmonella paratyphi A (strain ATCC 9150 / SARB42).